We begin with the raw amino-acid sequence, 331 residues long: Glyceraldehyde-3-phosphate dehydrogenase (331 aa).

NAD(+) contacts are provided by residues 12–13 (RI), D34, R78, and T120. Residues 149–151 (SCT), T180, 209–210 (TG), and R232 contribute to the D-glyceraldehyde 3-phosphate site. C150 acts as the Nucleophile in catalysis. N314 lines the NAD(+) pocket.

Belongs to the glyceraldehyde-3-phosphate dehydrogenase family. As to quaternary structure, homotetramer.

It is found in the cytoplasm. It catalyses the reaction D-glyceraldehyde 3-phosphate + phosphate + NAD(+) = (2R)-3-phospho-glyceroyl phosphate + NADH + H(+). It participates in carbohydrate degradation; glycolysis; pyruvate from D-glyceraldehyde 3-phosphate: step 1/5. In terms of biological role, catalyzes the oxidative phosphorylation of glyceraldehyde 3-phosphate (G3P) to 1,3-bisphosphoglycerate (BPG) using the cofactor NAD. The first reaction step involves the formation of a hemiacetal intermediate between G3P and a cysteine residue, and this hemiacetal intermediate is then oxidized to a thioester, with concomitant reduction of NAD to NADH. The reduced NADH is then exchanged with the second NAD, and the thioester is attacked by a nucleophilic inorganic phosphate to produce BPG. In Escherichia fergusonii (strain ATCC 35469 / DSM 13698 / CCUG 18766 / IAM 14443 / JCM 21226 / LMG 7866 / NBRC 102419 / NCTC 12128 / CDC 0568-73), this protein is Glyceraldehyde-3-phosphate dehydrogenase (gapA).